Here is a 173-residue protein sequence, read N- to C-terminus: MALRPARCYRTTERRSYTRKEYVRAVPQPKVVHYVMGNSSVEFPVEVQLVSKSDILIRHNALESSRIAGNKYIMGECGRTGYLFNIRVYPHEILRENKMAAGAGADRISDGMRLSFGKAVGTAAKVKKGQEIITIGVNPERFYAAKEALRRCSMKLPTACKIVVTKGKELIKD.

This sequence belongs to the universal ribosomal protein uL16 family.

The polypeptide is Large ribosomal subunit protein uL16 (Methanococcus maripaludis (strain C5 / ATCC BAA-1333)).